The chain runs to 276 residues: Large ribosomal subunit protein uL2 (276 aa).

Residues 224-276 (AMNPVDHPLGGGEGKSSGGRHPVTPWGKPTKGYKTRNKKKPSSKLIVKRRGQK) form a disordered region. Positions 254-276 (KGYKTRNKKKPSSKLIVKRRGQK) are enriched in basic residues.

It belongs to the universal ribosomal protein uL2 family. Part of the 50S ribosomal subunit. Forms a bridge to the 30S subunit in the 70S ribosome.

In terms of biological role, one of the primary rRNA binding proteins. Required for association of the 30S and 50S subunits to form the 70S ribosome, for tRNA binding and peptide bond formation. It has been suggested to have peptidyltransferase activity; this is somewhat controversial. Makes several contacts with the 16S rRNA in the 70S ribosome. This Solidesulfovibrio magneticus (strain ATCC 700980 / DSM 13731 / RS-1) (Desulfovibrio magneticus) protein is Large ribosomal subunit protein uL2.